The primary structure comprises 492 residues: Peptidyl-prolyl cis-trans isomerase-like 4 (492 aa).

The PPIase cyclophilin-type domain maps to 1-161 (MAVLLETTLG…QDIRINHTVI (161 aa)). Positions 167 to 188 (DDPPDLLIPDRSPEPTREQLDS) are disordered. The span at 177–187 (RSPEPTREQLD) shows a compositional bias: basic and acidic residues. A Phosphoserine modification is found at serine 178. Threonine 182 bears the Phosphothreonine mark. Glycyl lysine isopeptide (Lys-Gly) (interchain with G-Cter in SUMO2) cross-links involve residues lysine 201, lysine 212, and lysine 218. Positions 240-318 (NVLFVCKLNP…RRIHVDFSQS (79 aa)) constitute an RRM domain. Residues lysine 321 and lysine 362 each participate in a glycyl lysine isopeptide (Lys-Gly) (interchain with G-Cter in SUMO2) cross-link. 2 disordered regions span residues 368–406 (DEQA…PIKN) and 423–492 (EESC…SKYR). Positions 377 to 390 (SHSHTSKKHKKKTH) are enriched in basic residues. Serine 393 bears the Phosphoserine mark. Residue lysine 405 forms a Glycyl lysine isopeptide (Lys-Gly) (interchain with G-Cter in SUMO2) linkage. The segment covering 426–452 (CWEKQKSEKRDRTQNRSRSRSRERDGH) has biased composition (basic and acidic residues). A Glycyl lysine isopeptide (Lys-Gly) (interchain with G-Cter in SUMO2) cross-link involves residue lysine 460. Serine 471 carries the phosphoserine modification. The span at 482–492 (KSKDKEKSKYR) shows a compositional bias: basic and acidic residues.

This sequence belongs to the cyclophilin-type PPIase family. PPIL4 subfamily. As to expression, abundantly expressed in kidney but has a ubiquitously low expression pattern in other adult tissues.

The protein localises to the nucleus. The catalysed reaction is [protein]-peptidylproline (omega=180) = [protein]-peptidylproline (omega=0). PPIases accelerate the folding of proteins. It catalyzes the cis-trans isomerization of proline imidic peptide bonds in oligopeptides. The sequence is that of Peptidyl-prolyl cis-trans isomerase-like 4 (PPIL4) from Homo sapiens (Human).